The chain runs to 151 residues: Protein SprT-like (151 aa).

The region spanning 7 to 147 (QKLTESISES…GKCKGKLHLH (141 aa)) is the SprT-like domain. Residue histidine 67 coordinates Zn(2+). The active site involves glutamate 68. A Zn(2+)-binding site is contributed by histidine 71.

This sequence belongs to the SprT family. Zn(2+) is required as a cofactor.

The protein resides in the cytoplasm. This Staphylococcus carnosus (strain TM300) protein is Protein SprT-like.